Reading from the N-terminus, the 196-residue chain is Putative NADH dehydrogenase/NAD(P)H nitroreductase xcc-b100_0585 (196 aa).

This sequence belongs to the nitroreductase family. HadB/RutE subfamily. Requires FMN as cofactor.

The chain is Putative NADH dehydrogenase/NAD(P)H nitroreductase xcc-b100_0585 from Xanthomonas campestris pv. campestris (strain B100).